Here is a 218-residue protein sequence, read N- to C-terminus: Large ribosomal subunit protein uL3 (218 aa).

Residues 132–152 are disordered; it reads FKGQGASHGTQAVHRRPGSIG.

This sequence belongs to the universal ribosomal protein uL3 family. Part of the 50S ribosomal subunit. Forms a cluster with proteins L14 and L19.

In terms of biological role, one of the primary rRNA binding proteins, it binds directly near the 3'-end of the 23S rRNA, where it nucleates assembly of the 50S subunit. The protein is Large ribosomal subunit protein uL3 of Rhodococcus erythropolis (strain PR4 / NBRC 100887).